Reading from the N-terminus, the 232-residue chain is Histone H1A (232 aa).

Residues 1 to 18 (MSDPAVEVTPAVPVASPA) show a composition bias toward low complexity. Disordered stretches follow at residues 1–42 (MSDP…THLP) and 98–232 (LQTK…AKKA). The H15 domain maps to 39–113 (THLPVSDMVV…GASGSFKLPA (75 aa)). Basic residues-rich tracts occupy residues 131–141 (KPKKAAAPKPK), 147–173 (KVKK…KTTK), 181–214 (AAKK…KAKK), and 222–232 (KAAKKPAAKKA).

Belongs to the histone H1/H5 family.

The protein resides in the nucleus. Its subcellular location is the chromosome. Functionally, histones H1 are necessary for the condensation of nucleosome chains into higher-order structures. In Chironomus tentans (Midge), this protein is Histone H1A.